A 637-amino-acid polypeptide reads, in one-letter code: 1-deoxy-D-xylulose-5-phosphate synthase (637 aa).

Thiamine diphosphate is bound by residues His-76 and Gly-117–Ser-119. Residue Asp-148 coordinates Mg(2+). Thiamine diphosphate is bound by residues Gly-149 to Ala-150, Asn-177, Tyr-294, and Glu-381. Asn-177 provides a ligand contact to Mg(2+).

Belongs to the transketolase family. DXPS subfamily. Homodimer. Requires Mg(2+) as cofactor. Thiamine diphosphate serves as cofactor.

The enzyme catalyses D-glyceraldehyde 3-phosphate + pyruvate + H(+) = 1-deoxy-D-xylulose 5-phosphate + CO2. Its pathway is metabolic intermediate biosynthesis; 1-deoxy-D-xylulose 5-phosphate biosynthesis; 1-deoxy-D-xylulose 5-phosphate from D-glyceraldehyde 3-phosphate and pyruvate: step 1/1. Functionally, catalyzes the acyloin condensation reaction between C atoms 2 and 3 of pyruvate and glyceraldehyde 3-phosphate to yield 1-deoxy-D-xylulose-5-phosphate (DXP). The sequence is that of 1-deoxy-D-xylulose-5-phosphate synthase from Neisseria gonorrhoeae (strain NCCP11945).